The sequence spans 623 residues: uncharacterized protein (623 aa).

Residues 157–166 show a composition bias toward basic and acidic residues; that stretch reads LNESPLRDQQ. The disordered stretch occupies residues 157–237; it reads LNESPLRDQQ…QGLPDHNNSI (81 aa). Polar residues predominate over residues 167 to 177; sequence ESSTPSKNSTL. Residues 193–210 are compositionally biased toward low complexity; it reads AFRPLPSPSRRSSQSAPA.

This is an uncharacterized protein from Macaca fascicularis (Crab-eating macaque).